The chain runs to 386 residues: Methionine aminotransferase (386 aa).

N6-(pyridoxal phosphate)lysine is present on Lys236.

This sequence belongs to the class-I pyridoxal-phosphate-dependent aminotransferase family. In terms of assembly, homodimer. Pyridoxal 5'-phosphate serves as cofactor.

It localises to the cytoplasm. The catalysed reaction is a 2-oxocarboxylate + L-methionine = 4-methylsulfanyl-2-oxobutanoate + an L-alpha-amino acid. Functionally, shows aminotransferase activity with methionine and histidine as substrates, and to a lesser extent also with phenylalanine. In Escherichia coli (strain K12), this protein is Methionine aminotransferase (ybdL).